The chain runs to 372 residues: Histidinol-phosphate aminotransferase (372 aa).

Lys230 bears the N6-(pyridoxal phosphate)lysine mark.

Belongs to the class-II pyridoxal-phosphate-dependent aminotransferase family. Histidinol-phosphate aminotransferase subfamily. In terms of assembly, homodimer. Pyridoxal 5'-phosphate is required as a cofactor.

It catalyses the reaction L-histidinol phosphate + 2-oxoglutarate = 3-(imidazol-4-yl)-2-oxopropyl phosphate + L-glutamate. The protein operates within amino-acid biosynthesis; L-histidine biosynthesis; L-histidine from 5-phospho-alpha-D-ribose 1-diphosphate: step 7/9. In Paenarthrobacter aurescens (strain TC1), this protein is Histidinol-phosphate aminotransferase.